The following is a 152-amino-acid chain: D-aminoacyl-tRNA deacylase (152 aa).

A Gly-cisPro motif, important for rejection of L-amino acids motif is present at residues 142–143; the sequence is GP.

This sequence belongs to the DTD family. In terms of assembly, homodimer.

Its subcellular location is the cytoplasm. It catalyses the reaction glycyl-tRNA(Ala) + H2O = tRNA(Ala) + glycine + H(+). It carries out the reaction a D-aminoacyl-tRNA + H2O = a tRNA + a D-alpha-amino acid + H(+). Functionally, an aminoacyl-tRNA editing enzyme that deacylates mischarged D-aminoacyl-tRNAs. Also deacylates mischarged glycyl-tRNA(Ala), protecting cells against glycine mischarging by AlaRS. Acts via tRNA-based rather than protein-based catalysis; rejects L-amino acids rather than detecting D-amino acids in the active site. By recycling D-aminoacyl-tRNA to D-amino acids and free tRNA molecules, this enzyme counteracts the toxicity associated with the formation of D-aminoacyl-tRNA entities in vivo and helps enforce protein L-homochirality. This chain is D-aminoacyl-tRNA deacylase, found in Burkholderia vietnamiensis (strain G4 / LMG 22486) (Burkholderia cepacia (strain R1808)).